Here is an 823-residue protein sequence, read N- to C-terminus: MDNTYNPQEVEEQAQQYWHKKQSFNVTEDLNKEKFYCLSMFPYPSGTLHMGHVRNYTLGDVIARYQRALGKNVLQPIGWDAFGLPAENAAIKNKIPPAEWTRKNIAAMKEQFLRLGNAYDWKREITTCDPEYYRWEQWFFIRLFEKGLVYKKNAVVNWDPVDQTVLANEQVVDGRGWRSGALVERKEISQWFIKITSYADELLSSLDSLDEWPAQVKQMQRNWIGKSIGTEIYFNVNNYPKRLKIYTTRPDTLMGATYLAVATDHPLAKEAASNNKKVQEFLDSCQGIKIAEAELATMEKRGIDTGMTAIHPITGKELPIWVANFVLMQYGSGAVMAVPAHDQRDWEFAQKYQLPVKQVIKPIDIEHDFNQSAYTEEGILINSNQFDNLLSSKAIQVITNFLEENDAGKATINYRLRDWGVSRQRYWGTPIPMIICEQCGIVPVPDEELPVVLPENVDFTGTGSPLTQCKEFVNVTCPKCGQDATRETDTFDTFVESSWYYARFACKGQENAMLDDRAKYWTPVDQYIGGIEHAVMHLLYARFFHKLMRDEGLVNSDEPFKALLTQGMVLKDGHKMSKSLGNVVDPNHLINTYGADTARLFVMFASPPEQSLEWSDSGVEGAHRFLKRVWAFSHQHRDMLIDINDSILSGNGHVDWKEAESRLKKSRHIVHQILAQATHDYDRNQFNTVVSGCMKLFNEISDYSIETENDKFFIHSSISILLRLLAPITPHICHCLWQQLGFDKAIIDAPWPKVDKSALKTDEVDYVVQVNGKLRAQFTASTDATEEELIAAAKEHAHNFVVNHTIKKAIIVPHRQLINLVIG.

The short motif at 42 to 52 (PYPSGTLHMGH) is the 'HIGH' region element. A 'KMSKS' region motif is present at residues 575–579 (KMSKS). Residue K578 coordinates ATP.

The protein belongs to the class-I aminoacyl-tRNA synthetase family.

It localises to the cytoplasm. It carries out the reaction tRNA(Leu) + L-leucine + ATP = L-leucyl-tRNA(Leu) + AMP + diphosphate. In Legionella pneumophila subsp. pneumophila (strain Philadelphia 1 / ATCC 33152 / DSM 7513), this protein is Leucine--tRNA ligase.